The sequence spans 166 residues: uncharacterized protein (166 aa).

Composition is skewed to basic and acidic residues over residues 1 to 13 (MAEV…EHNS), 21 to 112 (KAND…KTKE), and 119 to 137 (DNVE…KEGG). A disordered region spans residues 1–144 (MAEVSKKRCE…EGGSKAWNKT (144 aa)). 8 tandem repeats follow at residues 31 to 41 (DKTKETAGSAK), 42 to 52 (DKTKETAGSAK), 53 to 63 (DKTKETAESAK), 64 to 74 (DKTKETAGSAK), 75 to 85 (DKTKETAESAK), 86 to 96 (DKTKETAGSAK), 97 to 107 (DKTKETAESAK), and 108 to 118 (DKTKETAGNVR). Residues 31 to 118 (DKTKETAGSA…KTKETAGNVR (88 aa)) form an 8 X 11 AA approximate tandem repeats of D-K-T-K-E-T-A-G/E-S-A-K region.

It belongs to the LEA type 1 family.

This is an uncharacterized protein from Encephalitozoon cuniculi (strain GB-M1) (Microsporidian parasite).